Here is a 22-residue protein sequence, read N- to C-terminus: Hemocyanin subunit 4 (22 aa).

Belongs to the tyrosinase family. Hemocyanin subfamily. As to expression, hemolymph.

It localises to the secreted. The protein resides in the extracellular space. In terms of biological role, hemocyanins are copper-containing oxygen carriers occurring freely dissolved in the hemolymph of many mollusks and arthropods. This Homarus americanus (American lobster) protein is Hemocyanin subunit 4.